A 285-amino-acid chain; its full sequence is Octanoyltransferase (285 aa).

Positions 50 to 277 (LRTPDELWIV…NIAQRHAGDI (228 aa)) constitute a BPL/LPL catalytic domain. Residues 89-96 (RGGQVTWH), 189-191 (SLG), and 202-204 (GIA) each bind substrate. C220 serves as the catalytic Acyl-thioester intermediate.

Belongs to the LipB family.

The protein localises to the cytoplasm. The enzyme catalyses octanoyl-[ACP] + L-lysyl-[protein] = N(6)-octanoyl-L-lysyl-[protein] + holo-[ACP] + H(+). Its pathway is protein modification; protein lipoylation via endogenous pathway; protein N(6)-(lipoyl)lysine from octanoyl-[acyl-carrier-protein]: step 1/2. Its function is as follows. Catalyzes the transfer of endogenously produced octanoic acid from octanoyl-acyl-carrier-protein onto the lipoyl domains of lipoate-dependent enzymes. Lipoyl-ACP can also act as a substrate although octanoyl-ACP is likely to be the physiological substrate. The polypeptide is Octanoyltransferase (Psychrobacter cryohalolentis (strain ATCC BAA-1226 / DSM 17306 / VKM B-2378 / K5)).